We begin with the raw amino-acid sequence, 189 residues long: Holliday junction branch migration complex subunit RuvA (189 aa).

Positions 1–63 (MIYAMYGVLE…DDEISLYGFS (63 aa)) are domain I. The tract at residues 64 to 135 (DVLKLKLFEK…ELKDSMKEFD (72 aa)) is domain II. Positions 135–139 (DVTLT) are flexible linker. Positions 140-189 (EKDKKILEAIEALVTLGFSRNQSKKAVTQILKKDDSLDDIIKKALKFLSR) are domain III.

This sequence belongs to the RuvA family. As to quaternary structure, homotetramer. Forms an RuvA(8)-RuvB(12)-Holliday junction (HJ) complex. HJ DNA is sandwiched between 2 RuvA tetramers; dsDNA enters through RuvA and exits via RuvB. An RuvB hexamer assembles on each DNA strand where it exits the tetramer. Each RuvB hexamer is contacted by two RuvA subunits (via domain III) on 2 adjacent RuvB subunits; this complex drives branch migration. In the full resolvosome a probable DNA-RuvA(4)-RuvB(12)-RuvC(2) complex forms which resolves the HJ.

The protein localises to the cytoplasm. Its function is as follows. The RuvA-RuvB-RuvC complex processes Holliday junction (HJ) DNA during genetic recombination and DNA repair, while the RuvA-RuvB complex plays an important role in the rescue of blocked DNA replication forks via replication fork reversal (RFR). RuvA specifically binds to HJ cruciform DNA, conferring on it an open structure. The RuvB hexamer acts as an ATP-dependent pump, pulling dsDNA into and through the RuvAB complex. HJ branch migration allows RuvC to scan DNA until it finds its consensus sequence, where it cleaves and resolves the cruciform DNA. In Thermosipho melanesiensis (strain DSM 12029 / CIP 104789 / BI429), this protein is Holliday junction branch migration complex subunit RuvA.